Reading from the N-terminus, the 106-residue chain is RNA-binding protein Hfq (106 aa).

One can recognise a Sm domain in the interval 9 to 68 (DPYLNALRKERVPVSIYLVNGIKLQGQIESFDAFVILLRNNISQMVYKHAVSTIVPSRNI). The interval 78-106 (EDEAGEEISAEYTPNAEGQAEATADPLYD) is disordered.

The protein belongs to the Hfq family. As to quaternary structure, homohexamer.

Its function is as follows. RNA chaperone that binds small regulatory RNA (sRNAs) and mRNAs to facilitate mRNA translational regulation in response to envelope stress, environmental stress and changes in metabolite concentrations. Also binds with high specificity to tRNAs. In Dichelobacter nodosus (strain VCS1703A), this protein is RNA-binding protein Hfq.